The sequence spans 506 residues: Epstein-Barr nuclear antigen leader protein (506 aa).

Disordered regions lie at residues 1–470 and 485–506; these read MGDR…PRPP and FEPP…EDED. Ser35 bears the Phosphoserine; by host mark.

This sequence belongs to the lymphocryptovirus EBNA-LP family. As to quaternary structure, homooligomer. Interacts with host SP100; this interaction is important for EBNA-LP coactivator activity. Interacts with host HAX1, ERR1 and HSPA2. Interacts with host PRKDC and AKAP8L; these interactions modulate the coactivator function of EBNA-LP. Post-translationally, phosphorylated by the cellular protein kinase cdc2.

The protein localises to the host nucleus. Functionally, plays an important role in the establishment of B-cell immortalization by acting as an EBNA2 coactivator. This transcriptional activation preferentially enhances the expression of the major viral protein LMP1. The interaction between EBNA-LP and host SP100 correlates with coactivation of EBNA2 and the relocalization of SP100 from PML nuclear bodies into nucleoplasm. This Epstein-Barr virus (strain B95-8) (HHV-4) protein is Epstein-Barr nuclear antigen leader protein (EBNA-LP).